Here is a 248-residue protein sequence, read N- to C-terminus: tRNA (guanine-N(1)-)-methyltransferase (248 aa).

S-adenosyl-L-methionine contacts are provided by residues glycine 113 and 133-138; that span reads IGDYVL.

Belongs to the RNA methyltransferase TrmD family. Homodimer.

It localises to the cytoplasm. It catalyses the reaction guanosine(37) in tRNA + S-adenosyl-L-methionine = N(1)-methylguanosine(37) in tRNA + S-adenosyl-L-homocysteine + H(+). In terms of biological role, specifically methylates guanosine-37 in various tRNAs. The sequence is that of tRNA (guanine-N(1)-)-methyltransferase from Shewanella piezotolerans (strain WP3 / JCM 13877).